We begin with the raw amino-acid sequence, 427 residues long: MSVSFENKETNRGVLTFTISQDQIKPELDRVFKSVKKSLNVPGFRKGHLPRPIFDQKFGEESLYQDVMNALLPNAYEAAVKEAGLEVVAQPKIDVTSMEKGQDWVITAEVVTKPEVKLGDYKNLEVSVDVEKEVTDADVEERIERERNNLAELVIKEAAAENGDTVVIDFVGSIDGVEFDGGKGENFSLGLGSGQFIPGFEDQLVGHSAGETVDVIVTFPEDYQAEDLAGKEAKFVTTIHEVKAKEVPALDDELAKDIDEEVETLADLKEKYRKELAAAKEEAYKDAVEGAAIDTAVENAEIVELPEEMIHEEVHRSVNEFLGNLQRQGINPDMYFQITGTTQEDLHNQYQAEAESRTKTNLVIEAVAKAEGFDASEEEIQKEVEQLAADYNMEVAQVQNLLSADMLKHDITIKKAVELITSTATVK.

Positions glycine 163–proline 248 constitute a PPIase FKBP-type domain.

This sequence belongs to the FKBP-type PPIase family. Tig subfamily.

It is found in the cytoplasm. It carries out the reaction [protein]-peptidylproline (omega=180) = [protein]-peptidylproline (omega=0). Functionally, involved in protein export. Acts as a chaperone by maintaining the newly synthesized protein in an open conformation. Functions as a peptidyl-prolyl cis-trans isomerase. This Streptococcus pneumoniae (strain JJA) protein is Trigger factor.